The primary structure comprises 192 residues: GTP cyclohydrolase 1 (192 aa).

Cys-82, His-85, and Cys-153 together coordinate Zn(2+).

It belongs to the GTP cyclohydrolase I family. Toroid-shaped homodecamer, composed of two pentamers of five dimers.

The catalysed reaction is GTP + H2O = 7,8-dihydroneopterin 3'-triphosphate + formate + H(+). It functions in the pathway cofactor biosynthesis; 7,8-dihydroneopterin triphosphate biosynthesis; 7,8-dihydroneopterin triphosphate from GTP: step 1/1. The polypeptide is GTP cyclohydrolase 1 (Rickettsia bellii (strain OSU 85-389)).